The sequence spans 509 residues: Probable xyloglucan galactosyltransferase GT12 (509 aa).

Topologically, residues methionine 1–lysine 3 are cytoplasmic. Residues proline 4 to phenylalanine 24 form a helical; Signal-anchor for type II membrane protein membrane-spanning segment. Residues glutamine 25–alanine 509 are Lumenal-facing. 8 N-linked (GlcNAc...) asparagine glycosylation sites follow: asparagine 27, asparagine 59, asparagine 65, asparagine 169, asparagine 170, asparagine 195, asparagine 257, and asparagine 416.

The protein belongs to the glycosyltransferase 47 family. In terms of tissue distribution, expressed in pollen grains.

It is found in the golgi apparatus membrane. Functions in xyloglucan synthesis by adding side chains to the xylosylated glucan backbone. Involved in the galactosylation of hemicellulose xyloglucan. The protein is Probable xyloglucan galactosyltransferase GT12 of Arabidopsis thaliana (Mouse-ear cress).